Reading from the N-terminus, the 259-residue chain is Probable kinetochore protein spc25 (259 aa).

Residues 1-20 (MSRKSVMSSTFEPSLSTSRQ) are compositionally biased toward polar residues. The interval 1–25 (MSRKSVMSSTFEPSLSTSRQPLGPS) is disordered. Positions 59-162 (RKRVLEERNQ…HAAQLEAQAR (104 aa)) form a coiled coil.

This sequence belongs to the SPC25 family. In terms of assembly, component of the NDC80 complex, which consists of kpr-1/ndc80, kpr-2/nuf2, kpr-3/spc24 and kpr-4/spc25.

The protein resides in the nucleus. It is found in the chromosome. It localises to the centromere. The protein localises to the kinetochore. Its function is as follows. Acts as a component of the essential kinetochore-associated NDC80 complex, which is required for chromosome segregation and spindle checkpoint activity. The polypeptide is Probable kinetochore protein spc25 (kpr-4) (Neurospora crassa (strain ATCC 24698 / 74-OR23-1A / CBS 708.71 / DSM 1257 / FGSC 987)).